Consider the following 262-residue polypeptide: Glucosamine-6-phosphate deaminase (262 aa).

The Proton acceptor; for enolization step role is filled by aspartate 63. Residue asparagine 129 is the For ring-opening step of the active site. Histidine 131 acts as the Proton acceptor; for ring-opening step in catalysis. Glutamate 136 acts as the For ring-opening step in catalysis.

This sequence belongs to the glucosamine/galactosamine-6-phosphate isomerase family. NagB subfamily.

The catalysed reaction is alpha-D-glucosamine 6-phosphate + H2O = beta-D-fructose 6-phosphate + NH4(+). It functions in the pathway amino-sugar metabolism; N-acetylneuraminate degradation; D-fructose 6-phosphate from N-acetylneuraminate: step 5/5. Functionally, catalyzes the reversible isomerization-deamination of glucosamine 6-phosphate (GlcN6P) to form fructose 6-phosphate (Fru6P) and ammonium ion. This is Glucosamine-6-phosphate deaminase from Bacillus cereus (strain ZK / E33L).